The sequence spans 49 residues: Cytochrome b559 subunit beta (49 aa).

The chain crosses the membrane as a helical span at residues 24 to 40; it reads WLAVHVLGVPTVFFLGA. H28 contributes to the heme binding site.

It belongs to the PsbE/PsbF family. In terms of assembly, heterodimer of an alpha subunit and a beta subunit. PSII is composed of 1 copy each of membrane proteins PsbA, PsbB, PsbC, PsbD, PsbE, PsbF, PsbH, PsbI, PsbJ, PsbK, PsbL, PsbM, PsbT, PsbX, PsbY, Psb30/Ycf12, peripheral proteins PsbO, CyanoQ (PsbQ), PsbU, PsbV and a large number of cofactors. It forms dimeric complexes. It depends on heme b as a cofactor.

Its subcellular location is the cellular thylakoid membrane. This b-type cytochrome is tightly associated with the reaction center of photosystem II (PSII). PSII is a light-driven water:plastoquinone oxidoreductase that uses light energy to abstract electrons from H(2)O, generating O(2) and a proton gradient subsequently used for ATP formation. It consists of a core antenna complex that captures photons, and an electron transfer chain that converts photonic excitation into a charge separation. The polypeptide is Cytochrome b559 subunit beta (Prochlorococcus marinus (strain MIT 9303)).